The following is a 121-amino-acid chain: Large ribosomal subunit protein bL12 (121 aa).

This sequence belongs to the bacterial ribosomal protein bL12 family. In terms of assembly, homodimer. Part of the ribosomal stalk of the 50S ribosomal subunit. Forms a multimeric L10(L12)X complex, where L10 forms an elongated spine to which 2 to 4 L12 dimers bind in a sequential fashion. Binds GTP-bound translation factors.

Its function is as follows. Forms part of the ribosomal stalk which helps the ribosome interact with GTP-bound translation factors. Is thus essential for accurate translation. This is Large ribosomal subunit protein bL12 from Pseudomonas syringae pv. tomato (strain ATCC BAA-871 / DC3000).